A 122-amino-acid polypeptide reads, in one-letter code: Large ribosomal subunit protein uL14 (122 aa).

This sequence belongs to the universal ribosomal protein uL14 family. As to quaternary structure, part of the 50S ribosomal subunit. Forms a cluster with proteins L3 and L19. In the 70S ribosome, L14 and L19 interact and together make contacts with the 16S rRNA in bridges B5 and B8.

Binds to 23S rRNA. Forms part of two intersubunit bridges in the 70S ribosome. This is Large ribosomal subunit protein uL14 from Bifidobacterium adolescentis (strain ATCC 15703 / DSM 20083 / NCTC 11814 / E194a).